Here is a 414-residue protein sequence, read N- to C-terminus: Translation initiation factor 2 subunit gamma (414 aa).

The region spanning 8 to 206 (QPEVNIGVVG…AIEKFIPTPP (199 aa)) is the tr-type G domain. Residues 17-24 (GHVDHGKT) form a G1 region. The Mg(2+) site is built by D20, T24, G45, and T47. 20–25 (DHGKTT) is a binding site for GTP. The G2 stretch occupies residues 45–49 (GMTIK). Zn(2+)-binding residues include C60, C63, C75, and C77. Residues 93–96 (DAPG) are G3. Residues 149-152 (NKVD) and 184-186 (SAL) each bind GTP. Residues 149 to 152 (NKVD) are G4. The segment at 184–186 (SAL) is G5.

It belongs to the TRAFAC class translation factor GTPase superfamily. Classic translation factor GTPase family. EIF2G subfamily. As to quaternary structure, heterotrimer composed of an alpha, a beta and a gamma chain. Mg(2+) is required as a cofactor.

It catalyses the reaction GTP + H2O = GDP + phosphate + H(+). Its function is as follows. eIF-2 functions in the early steps of protein synthesis by forming a ternary complex with GTP and initiator tRNA. This Aeropyrum pernix (strain ATCC 700893 / DSM 11879 / JCM 9820 / NBRC 100138 / K1) protein is Translation initiation factor 2 subunit gamma.